A 90-amino-acid chain; its full sequence is Secretoglobin family 1D member 2 (90 aa).

The signal sequence occupies residues 1-21 (MKLSVCLLLVTLALCCYQANA).

Belongs to the secretoglobin family. Lipophilin subfamily. In terms of tissue distribution, highest expression was found in skeletal muscle. Expressed as well in thymus, trachea, kidney, steroid responsive tissues (prostate, testis, uterus, breast and ovary) and salivary gland.

It localises to the secreted. Its function is as follows. May bind androgens and other steroids, may also bind estramustine, a chemotherapeutic agent used for prostate cancer. May be under transcriptional regulation of steroid hormones. The sequence is that of Secretoglobin family 1D member 2 (SCGB1D2) from Homo sapiens (Human).